Consider the following 526-residue polypeptide: Peptide chain release factor 3 (526 aa).

The 270-residue stretch at 8–277 folds into the tr-type G domain; that stretch reads NKRRTFAIIS…GLTEWAPKPQ (270 aa). GTP is bound by residues 17 to 24, 85 to 89, and 139 to 142; these read SHPDAGKT, DTPGH, and NKLD.

The protein belongs to the TRAFAC class translation factor GTPase superfamily. Classic translation factor GTPase family. PrfC subfamily.

The protein localises to the cytoplasm. Its function is as follows. Increases the formation of ribosomal termination complexes and stimulates activities of RF-1 and RF-2. It binds guanine nucleotides and has strong preference for UGA stop codons. It may interact directly with the ribosome. The stimulation of RF-1 and RF-2 is significantly reduced by GTP and GDP, but not by GMP. This chain is Peptide chain release factor 3, found in Actinobacillus pleuropneumoniae serotype 3 (strain JL03).